Reading from the N-terminus, the 339-residue chain is Dihydroorotate dehydrogenase (quinone) (339 aa).

FMN is bound by residues 62-66 (AGLDK) and threonine 86. Lysine 66 provides a ligand contact to substrate. Residue 111–115 (NRMGF) participates in substrate binding. FMN contacts are provided by asparagine 139 and asparagine 172. Residue asparagine 172 coordinates substrate. The active-site Nucleophile is the serine 175. Asparagine 177 lines the substrate pocket. Residues lysine 217 and threonine 245 each coordinate FMN. Residue 246 to 247 (NT) participates in substrate binding. Residues glycine 268, glycine 297, and 318–319 (YS) contribute to the FMN site.

This sequence belongs to the dihydroorotate dehydrogenase family. Type 2 subfamily. Monomer. FMN is required as a cofactor.

Its subcellular location is the cell membrane. It catalyses the reaction (S)-dihydroorotate + a quinone = orotate + a quinol. The protein operates within pyrimidine metabolism; UMP biosynthesis via de novo pathway; orotate from (S)-dihydroorotate (quinone route): step 1/1. In terms of biological role, catalyzes the conversion of dihydroorotate to orotate with quinone as electron acceptor. This Shewanella frigidimarina (strain NCIMB 400) protein is Dihydroorotate dehydrogenase (quinone).